We begin with the raw amino-acid sequence, 100 residues long: Large ribosomal subunit protein uL23 (100 aa).

It belongs to the universal ribosomal protein uL23 family. Part of the 50S ribosomal subunit. Contacts protein L29, and trigger factor when it is bound to the ribosome.

Functionally, one of the early assembly proteins it binds 23S rRNA. One of the proteins that surrounds the polypeptide exit tunnel on the outside of the ribosome. Forms the main docking site for trigger factor binding to the ribosome. The chain is Large ribosomal subunit protein uL23 from Yersinia pestis bv. Antiqua (strain Antiqua).